The following is a 566-amino-acid chain: ATP-binding protein SyrD (566 aa).

The 280-residue stretch at 22–301 (HPWLTFFTLL…LVSAMPMLAQ (280 aa)) folds into the ABC transmembrane type-1 domain. The next 6 membrane-spanning stretches (helical) occupy residues 24–44 (WLTF…IAVV), 61–81 (LFWF…ASLF), 132–152 (LLIM…IAYL), 158–178 (VVFA…LLFF), 250–270 (QLTL…FAVI), and 279–299 (VLAV…MPML). The ABC transporter domain occupies 343–566 (IQLKNVHMNY…VKCAVEGKRA (224 aa)). 380 to 387 (GGNGCGKS) lines the ATP pocket.

It belongs to the ABC transporter superfamily. In terms of assembly, dimer.

It localises to the cell inner membrane. In terms of biological role, ATP-driven efflux pump necessary for the secretion of syringomycin. May specifically bind syringomycin and translocate it to the periplasmic space. SyrD is also required for full expression of the syrB gene. This is ATP-binding protein SyrD (syrD) from Pseudomonas syringae pv. syringae.